The sequence spans 149 residues: Transcriptional regulator MraZ (149 aa).

SpoVT-AbrB domains are found at residues 7 to 54 (KYIN…GIAH) and 83 to 126 (AVQL…QPQN).

This sequence belongs to the MraZ family. Forms oligomers.

Its subcellular location is the cytoplasm. The protein resides in the nucleoid. In Rickettsia typhi (strain ATCC VR-144 / Wilmington), this protein is Transcriptional regulator MraZ.